Reading from the N-terminus, the 54-residue chain is Ovomucoid (54 aa).

The Kazal-like domain occupies 4-54 (VDCSDYPKPVCSLEYMPLCGSDSKTYSNKCDFCNAFVDSNGTLSLSHFGKC). 3 cysteine pairs are disulfide-bonded: cysteine 6–cysteine 36, cysteine 14–cysteine 33, and cysteine 22–cysteine 54. An N-linked (GlcNAc...) asparagine glycan is attached at asparagine 43.

The protein resides in the secreted. The sequence is that of Ovomucoid from Circus aeruginosus (Western marsh harrier).